Reading from the N-terminus, the 462-residue chain is Golgi-associated PDZ and coiled-coil motif-containing protein (462 aa).

Positions 83-194 (KAQSVSQINH…EDEALRGHIA (112 aa)) form a coiled coil. The PDZ domain occupies 288-371 (KVLLLKEDHE…EIEFEVVYVA (84 aa)). The segment at 427 to 449 (TDTHENGDLGTASETPLDDGASK) is disordered.

In terms of assembly, homooligomer. Interacts with FZD5. Interacts with FZD8. Interacts with GRID2 and BECN1. Interacts with CSPG5. Interacts with CLCN3. Interacts with STX6. Interacts with CFTR. Interacts with ASIC3. Interacts with GOLGA3. Interacts with NLGN1. Interacts with RHOQ. Interacts with MARCHF2; the interaction leads to CFTR ubiquitination and degradation. May interact with CACNG2. Interacts with CCDC62.

The protein localises to the cytoplasm. It is found in the golgi apparatus membrane. The protein resides in the golgi apparatus. It localises to the trans-Golgi network membrane. Its subcellular location is the synapse. The protein localises to the postsynaptic density. It is found in the cell projection. The protein resides in the dendrite. Functionally, plays a role in intracellular protein trafficking and degradation. May regulate CFTR chloride currents and acid-induced ASIC3 currents by modulating cell surface expression of both channels. May also regulate the intracellular trafficking of the ADR1B receptor. May play a role in autophagy. Together with MARCHF2 mediates the ubiquitination and lysosomal degradation of CFTR. Overexpression results in CFTR intracellular retention and degradation in the lysosomes. The protein is Golgi-associated PDZ and coiled-coil motif-containing protein (GOPC) of Pongo abelii (Sumatran orangutan).